The primary structure comprises 296 residues: MDKKPTIAILKNEIDKLKSSFDTEKDEKDTKINHILSVVEGLSKSLSLYIEDNDKETTNEEVNIDEIDKNIVKNLEDKVNCLEQDVQYLKNELKKKDADWQQKLDLIVHQFTKQYDSLKSSLLISQKETSVFQSVQNNSNLPNNSNLPIETPILQIKFAALTEYAQKPKRGSEFSAGIDLRSAYEYLVPANGNKLIKTDWKIQYPDGYFGKICSRSGLSLNHNLEVGAGIVDADYREGVSVVLNNLSPRDFHVAPGDRIAQLVCTPYITPEIVFCKPSDIPDTVRGKNGFGSTGIN.

Residues 66–102 adopt a coiled-coil conformation; sequence EIDKNIVKNLEDKVNCLEQDVQYLKNELKKKDADWQQ.

Belongs to the dUTPase family.

It carries out the reaction dUTP + H2O = dUMP + diphosphate + H(+). It participates in pyrimidine metabolism; dUMP biosynthesis; dUMP from dCTP (dUTP route): step 2/2. This enzyme is involved in nucleotide metabolism: it produces dUMP, the immediate precursor of thymidine nucleotides and it decreases the intracellular concentration of dUTP so that uracil cannot be incorporated into DNA. This Acheta domesticus (House cricket) protein is Probable deoxyuridine 5'-triphosphate nucleotidohydrolase.